The following is a 714-amino-acid chain: MAMNFGDHASGFRHNDVIRFINNEVLMDGSGPAFYVAFRSRPWNEVEDSLQAIVADSQVPRAIKRACTWSALALSVRVATRQREELLHHVRRLQRHAEERQATSWALTSQLQQLRLEHEVAATQLHLAQAALQQALNERDGLYGRLLQIERFPQAAPLAHEIMSGPQAEQNGAAACPLATEQQSDMVAMGTHANAQMPTPTDVLYVPGPLSPWAQGMQPPLPVPHPFPHPPPFPMKFPSLPPLPPAVVTGAEAAAVPLQMPPTEIHPPCPWPAVGFQEEMAPLWYQRSYIQEEDSKILQGSFPLGDSRSHSQGEGSERSQRMPLPGDSGCHNPLSESPQGTAPLGSSGCHSQEEGTEGPQGMDPLGNRERQNQKEGPKRARRMHTLVFRRSHKSEGPEGPQGTVPQGDSRSYSQEGCSDRAQEMATLVFIRRCKPEGPKRPQWTVPLGDSRSHIKEEGPEGPQRIVLQGDNRSYSQEGSPERAQGMATLVFSRSCKPEEGPERPQDTPLGDSRSHIKEEGPEGPQRIVLQGDNRSYSQEGSPERAQGMATLVFSRSCKPEEGPERPQDTPLGDSRSHIKEEGPEGPQRIVLQGDNRSYSQEGSRERAQGMATLVFSRSCKPEEGPERPQGTPLGDSRSHGVRESPKKWQPQRQKAKKPKVNKVSGSQQQEKPASFPVPVNWKCPWCKAINFSWRTACYKCKKACVPFESGGQTQ.

2 disordered regions span residues 300–419 and 431–675; these read GSFP…GCSD and RRCK…PASF. Composition is skewed to basic and acidic residues over residues 307 to 320 and 366 to 378; these read SRSHSQGEGSERSQ and GNRERQNQKEGPK. The span at 379–392 shows a compositional bias: basic residues; sequence RARRMHTLVFRRSH. The span at 403–416 shows a compositional bias: polar residues; the sequence is TVPQGDSRSYSQEG. 3 stretches are compositionally biased toward basic and acidic residues: residues 495 to 505, 557 to 567, and 636 to 646; these read CKPEEGPERPQ and SRSHGVRESPK. The segment at 677–706 adopts a RanBP2-type zinc-finger fold; that stretch reads VPVNWKCPWCKAINFSWRTACYKCKKACVP.

It belongs to the TEX13 family.

The chain is Testis-expressed protein 13D from Homo sapiens (Human).